Reading from the N-terminus, the 232-residue chain is 5'-methylthioadenosine/S-adenosylhomocysteine nucleosidase (232 aa).

The active-site Proton acceptor is the glutamate 12. Residues glycine 78, isoleucine 152, and 173-174 (ME) each bind substrate. Aspartate 197 acts as the Proton donor in catalysis.

This sequence belongs to the PNP/UDP phosphorylase family. MtnN subfamily. Homodimer.

The catalysed reaction is S-adenosyl-L-homocysteine + H2O = S-(5-deoxy-D-ribos-5-yl)-L-homocysteine + adenine. The enzyme catalyses S-methyl-5'-thioadenosine + H2O = 5-(methylsulfanyl)-D-ribose + adenine. It catalyses the reaction 5'-deoxyadenosine + H2O = 5-deoxy-D-ribose + adenine. It functions in the pathway amino-acid biosynthesis; L-methionine biosynthesis via salvage pathway; S-methyl-5-thio-alpha-D-ribose 1-phosphate from S-methyl-5'-thioadenosine (hydrolase route): step 1/2. In terms of biological role, catalyzes the irreversible cleavage of the glycosidic bond in both 5'-methylthioadenosine (MTA) and S-adenosylhomocysteine (SAH/AdoHcy) to adenine and the corresponding thioribose, 5'-methylthioribose and S-ribosylhomocysteine, respectively. Also cleaves 5'-deoxyadenosine, a toxic by-product of radical S-adenosylmethionine (SAM) enzymes, into 5-deoxyribose and adenine. Thus, is required for in vivo function of the radical SAM enzymes biotin synthase and lipoic acid synthase, that are inhibited by 5'-deoxyadenosine accumulation. The protein is 5'-methylthioadenosine/S-adenosylhomocysteine nucleosidase of Erwinia tasmaniensis (strain DSM 17950 / CFBP 7177 / CIP 109463 / NCPPB 4357 / Et1/99).